Consider the following 693-residue polypeptide: Elongation factor G (693 aa).

Residues 8-282 (KNTRNIGIMA…AVIDYLPSPL (275 aa)) form the tr-type G domain. GTP-binding positions include 17–24 (AHIDAGKT), 81–85 (DTPGH), and 135–138 (NKMD).

Belongs to the TRAFAC class translation factor GTPase superfamily. Classic translation factor GTPase family. EF-G/EF-2 subfamily.

It localises to the cytoplasm. Its function is as follows. Catalyzes the GTP-dependent ribosomal translocation step during translation elongation. During this step, the ribosome changes from the pre-translocational (PRE) to the post-translocational (POST) state as the newly formed A-site-bound peptidyl-tRNA and P-site-bound deacylated tRNA move to the P and E sites, respectively. Catalyzes the coordinated movement of the two tRNA molecules, the mRNA and conformational changes in the ribosome. The protein is Elongation factor G of Staphylococcus epidermidis (strain ATCC 35984 / DSM 28319 / BCRC 17069 / CCUG 31568 / BM 3577 / RP62A).